The primary structure comprises 1233 residues: DNA-directed RNA polymerase subunit beta' (1233 aa).

Positions 61, 63, 76, and 79 each coordinate Zn(2+). Residues Asp455, Asp457, and Asp459 each contribute to the Mg(2+) site. Residues Cys824, Cys898, Cys905, and Cys908 each contribute to the Zn(2+) site. The segment covering 1211–1220 (ELQKAFDKEP) has biased composition (basic and acidic residues). Residues 1211 to 1233 (ELQKAFDKEPASSTGNKASNSAK) are disordered. The span at 1221–1233 (ASSTGNKASNSAK) shows a compositional bias: polar residues.

Belongs to the RNA polymerase beta' chain family. In terms of assembly, the RNAP catalytic core consists of 2 alpha, 1 beta, 1 beta' and 1 omega subunit. When a sigma factor is associated with the core the holoenzyme is formed, which can initiate transcription. Requires Mg(2+) as cofactor. It depends on Zn(2+) as a cofactor.

The enzyme catalyses RNA(n) + a ribonucleoside 5'-triphosphate = RNA(n+1) + diphosphate. DNA-dependent RNA polymerase catalyzes the transcription of DNA into RNA using the four ribonucleoside triphosphates as substrates. In Oenococcus oeni (strain ATCC BAA-331 / PSU-1), this protein is DNA-directed RNA polymerase subunit beta'.